The chain runs to 278 residues: Indole-3-glycerol phosphate synthase (278 aa).

Belongs to the TrpC family.

The enzyme catalyses 1-(2-carboxyphenylamino)-1-deoxy-D-ribulose 5-phosphate + H(+) = (1S,2R)-1-C-(indol-3-yl)glycerol 3-phosphate + CO2 + H2O. Its pathway is amino-acid biosynthesis; L-tryptophan biosynthesis; L-tryptophan from chorismate: step 4/5. The polypeptide is Indole-3-glycerol phosphate synthase (Pseudomonas paraeruginosa (strain DSM 24068 / PA7) (Pseudomonas aeruginosa (strain PA7))).